Consider the following 132-residue polypeptide: Peptide methionine sulfoxide reductase MsrB (132 aa).

The region spanning 9–131 (DAQWRAELSP…NSASLSFHPK (123 aa)) is the MsrB domain. Cys-48, Cys-51, Cys-97, and Cys-100 together coordinate Zn(2+). The active-site Nucleophile is Cys-120.

This sequence belongs to the MsrB Met sulfoxide reductase family. It depends on Zn(2+) as a cofactor.

It catalyses the reaction L-methionyl-[protein] + [thioredoxin]-disulfide + H2O = L-methionyl-(R)-S-oxide-[protein] + [thioredoxin]-dithiol. In Thiobacillus denitrificans (strain ATCC 25259 / T1), this protein is Peptide methionine sulfoxide reductase MsrB.